The sequence spans 268 residues: Shikimate dehydrogenase (NADP(+)) (268 aa).

Shikimate contacts are provided by residues 13–15 (SLS) and threonine 60. Lysine 64 serves as the catalytic Proton acceptor. Glutamate 76 contributes to the NADP(+) binding site. Asparagine 85 and aspartate 100 together coordinate shikimate. Residues 124 to 128 (GAGGA), 148 to 153 (NRTMAR), and isoleucine 209 contribute to the NADP(+) site. Tyrosine 211 serves as a coordination point for shikimate. Glycine 232 lines the NADP(+) pocket.

This sequence belongs to the shikimate dehydrogenase family. As to quaternary structure, homodimer.

The enzyme catalyses shikimate + NADP(+) = 3-dehydroshikimate + NADPH + H(+). It functions in the pathway metabolic intermediate biosynthesis; chorismate biosynthesis; chorismate from D-erythrose 4-phosphate and phosphoenolpyruvate: step 4/7. In terms of biological role, involved in the biosynthesis of the chorismate, which leads to the biosynthesis of aromatic amino acids. Catalyzes the reversible NADPH linked reduction of 3-dehydroshikimate (DHSA) to yield shikimate (SA). This is Shikimate dehydrogenase (NADP(+)) from Staphylococcus aureus (strain JH1).